We begin with the raw amino-acid sequence, 447 residues long: D-ribitol-5-phosphate cytidylyltransferase (447 aa).

It belongs to the IspD/TarI cytidylyltransferase family. IspD subfamily. Homodimer.

The protein localises to the cytoplasm. It localises to the cytosol. The enzyme catalyses D-ribitol 5-phosphate + CTP + H(+) = CDP-L-ribitol + diphosphate. It carries out the reaction D-ribose 5-phosphate + CTP + H(+) = CDP-D-ribose + diphosphate. It catalyses the reaction D-ribulose 5-phosphate + CTP + H(+) = CDP-D-ribulose + diphosphate. It participates in protein modification; protein glycosylation. Functionally, cytidylyltransferase required for protein O-linked mannosylation. Catalyzes the formation of CDP-ribitol nucleotide sugar from D-ribitol 5-phosphate. CDP-ribitol is a substrate of FKTN during the biosynthesis of the phosphorylated O-mannosyl trisaccharide (N-acetylgalactosamine-beta-3-N-acetylglucosamine-beta-4-(phosphate-6-)mannose), a carbohydrate structure present in alpha-dystroglycan (DAG1), which is required for binding laminin G-like domain-containing extracellular proteins with high affinity. Shows activity toward other pentose phosphate sugars and mediates formation of CDP-ribulose or CDP-ribose using CTP and ribulose-5-phosphate or ribose-5-phosphate, respectively. Not involved in dolichol production. The chain is D-ribitol-5-phosphate cytidylyltransferase (Crppa) from Mus musculus (Mouse).